Consider the following 855-residue polypeptide: Lon protease (855 aa).

Residues 45-288 (IYLLTVKNVV…ETFRFLNIEY (244 aa)) enclose the Lon N-terminal domain. 439-446 (GPPGVGKT) contributes to the ATP binding site. The Lon proteolytic domain maps to 674-855 (IQVPGVVTGL…NEVIDLSIIK (182 aa)). Active-site residues include Ser-761 and Lys-804.

It belongs to the peptidase S16 family. Homohexamer. Organized in a ring with a central cavity.

The protein localises to the cytoplasm. The enzyme catalyses Hydrolysis of proteins in presence of ATP.. Its function is as follows. ATP-dependent serine protease that mediates the selective degradation of mutant and abnormal proteins as well as certain short-lived regulatory proteins. Required for cellular homeostasis and for survival from DNA damage and developmental changes induced by stress. Degrades polypeptides processively to yield small peptide fragments that are 5 to 10 amino acids long. Binds to DNA in a double-stranded, site-specific manner. This Karelsulcia muelleri (strain GWSS) (Sulcia muelleri) protein is Lon protease.